A 630-amino-acid chain; its full sequence is A-type voltage-gated potassium channel KCND2 (630 aa).

Topologically, residues 1–184 (MAAGVAAWLP…FENPHTSTMA (184 aa)) are cytoplasmic. The interaction with KCNIP1, KCNIP2, and other family members stretch occupies residues 2–20 (AAGVAAWLPFARAAAIGWM). A Phosphothreonine modification is found at threonine 38. The segment at 71–90 (ERDFFYHPETQQYFFDRDPD) is interaction with KCNIP1. Zn(2+) contacts are provided by histidine 105, cysteine 111, cysteine 132, and cysteine 133. The helical transmembrane segment at 185–206 (LVFYYVTGFFIAVSVIANVVET) threads the bilayer. The Extracellular portion of the chain corresponds to 207–226 (VPCGSSPGHIKELPCGERYA). The chain crosses the membrane as a helical span at residues 227-249 (VAFFCLDTACVMIFTVEYLLRLA). Residues 250–256 (AAPSRYR) are Cytoplasmic-facing. Residues 257-281 (FVRSVMSIIDVVAILPYYIGLVMTD) form a helical membrane-spanning segment. Residues 282–287 (NEDVSG) are Extracellular-facing. Residues 288-307 (AFVTLRVFRVFRIFKFSRHS) form a helical; Voltage-sensor membrane-spanning segment. Topologically, residues 308 to 321 (QGLRILGYTLKSCA) are cytoplasmic. Residues 308-321 (QGLRILGYTLKSCA) are S4-S5 linker. A helical membrane pass occupies residues 322–345 (SELGFLLFSLTMAIIIFATVMFYA). The Extracellular portion of the chain corresponds to 346–357 (EKGSSASKFTSI). An intramembrane region (helical) is located at residues 358-369 (PAAFWYTIVTMT). K(+) contacts are provided by threonine 370, leucine 371, glycine 372, and tyrosine 373. The Selectivity filter motif lies at 370 to 375 (TLGYGD). Residues 370–377 (TLGYGDMV) lie within the membrane without spanning it. The Extracellular segment spans residues 378–380 (PKT). Residues 381–403 (IAGKIFGSICSLSGVLVIALPVP) form a helical membrane-spanning segment. Residues 404–630 (VIVSNFSRIY…GGNIVRVSAL (227 aa)) lie on the Cytoplasmic side of the membrane. Residue serine 438 is modified to Phosphoserine. Positions 474–489 (FETQHHHLLHCLEKTT) are required for dendritic targeting. An important for normal channel activation and inactivation, for interaction with KCNIP2, and probably other family members as well region spans residues 474–630 (FETQHHHLLH…GGNIVRVSAL (157 aa)). Residues serine 548, serine 552, serine 572, and serine 575 each carry the phosphoserine modification. The disordered stretch occupies residues 600 to 623 (IPTPPVTTPEGDDRPESPEYSGGN). Residues threonine 602 and threonine 607 each carry the phosphothreonine modification. Position 616 is a phosphoserine (serine 616). The PDZ-binding signature appears at 627-630 (VSAL).

The protein belongs to the potassium channel family. D (Shal) (TC 1.A.1.2) subfamily. Kv4.2/KCND2 sub-subfamily. In terms of assembly, homotetramer or heterotetramer with KCND1 or KCND3. Associates with the regulatory subunits KCNIP1, KCNIP2, KCNIP3 and KCNIP4. Interacts with DPP6, DPP10, DLG4 and DLG1. In vivo, probably exists as heteromeric complex containing variable proportions of KCND1, KCND2, KCND3, KCNIP1, KCNIP2, KCNIP3, KCNIP4, DPP6 and DPP10. The tetrameric channel can associate with up to four regulatory subunits, such as KCNIP2 or KCNIP4. Interaction with KCNIP3 promotes tetramerization and formation of a functional potassium channel. Interaction with four KCNIP4 chains does not reduce interaction with DPP10. Probably part of a complex consisting of KCNIP1, KCNIP2 isoform 3 and KCND2. Interacts with FLNA and FLNC. Interacts with NCS1/FREQ. Identified in a complex with cAMP-dependent protein kinase (PKA), CAV3, AKAP6 and KCND3 in cardiac myocytes. Interacts (via S1 and S2 helices) with DPP6; this interaction stabilizes the conformation of the S1-S2 helices and facilitates S4 conformational change, including S4 sliding up and down, thereby accelerating activation, inactivation, and recovery. Phosphorylation at Ser-438 in response to MAPK activation is increased in stimulated dendrites. Interaction with KCNIP2 and DPP6 propomtes phosphorylation by PKA at Ser-552. Phosphorylation at Ser-552 has no effect on interaction with KCNIP3, but is required for the regulation of channel activity by KCNIP3. Phosphorylation at Ser-552 leads to KCND2 internalization. Phosphorylated by MAPK in response to signaling via the metabotropic glutamate receptor GRM5. Phosphorylation at Ser-616 is required for the down-regulation of neuronal A-type currents in response to signaling via GRM5. As to expression, detected in brain frontal cortex.

The protein resides in the cell membrane. It is found in the cell projection. The protein localises to the dendrite. It localises to the synapse. Its subcellular location is the perikaryon. The protein resides in the postsynaptic cell membrane. It is found in the dendritic spine. The protein localises to the sarcolemma. It localises to the cell junction. Its subcellular location is the membrane. The protein resides in the caveola. The catalysed reaction is K(+)(in) = K(+)(out). Its function is as follows. Voltage-gated potassium channel that mediates transmembrane potassium transport in excitable membranes, primarily in the brain. Mediates the major part of the dendritic A-type current I(SA) in brain neurons. This current is activated at membrane potentials that are below the threshold for action potentials. It regulates neuronal excitability, prolongs the latency before the first spike in a series of action potentials, regulates the frequency of repetitive action potential firing, shortens the duration of action potentials and regulates the back-propagation of action potentials from the neuronal cell body to the dendrites. Contributes to the regulation of the circadian rhythm of action potential firing in suprachiasmatic nucleus neurons, which regulates the circadian rhythm of locomotor activity. Functions downstream of the metabotropic glutamate receptor GRM5 and plays a role in neuronal excitability and in nociception mediated by activation of GRM5. Mediates the transient outward current I(to) in rodent heart left ventricle apex cells, but not in human heart, where this current is mediated by another family member. Forms tetrameric potassium-selective channels through which potassium ions pass in accordance with their electrochemical gradient. The channel alternates between opened and closed conformations in response to the voltage difference across the membrane. Can form functional homotetrameric channels and heterotetrameric channels that contain variable proportions of KCND2 and KCND3; channel properties depend on the type of pore-forming alpha subunits that are part of the channel. In vivo, membranes probably contain a mixture of heteromeric potassium channel complexes. Interaction with specific isoforms of the regulatory subunits KCNIP1, KCNIP2, KCNIP3 or KCNIP4 strongly increases expression at the cell surface and thereby increases channel activity; it modulates the kinetics of channel activation and inactivation, shifts the threshold for channel activation to more negative voltage values, shifts the threshold for inactivation to less negative voltages and accelerates recovery after inactivation. Likewise, interaction with DPP6 or DPP10 promotes expression at the cell membrane and regulates both channel characteristics and activity. Upon depolarization, the channel goes from a resting closed state (C state) to an activated but non-conducting state (C* state), from there, the channel may either inactivate (I state) or open (O state). The sequence is that of A-type voltage-gated potassium channel KCND2 from Oryctolagus cuniculus (Rabbit).